We begin with the raw amino-acid sequence, 288 residues long: UPF0761 membrane protein HSM_1104 (288 aa).

The next 6 membrane-spanning stretches (helical) occupy residues 36–56, 92–112, 127–147, 176–196, 200–220, and 240–260; these read TLAL…FPVF, QMSA…IHSI, PAIF…IVIA, LLSL…YMVV, KVSI…FTLG, and AMAT…AVLL.

This sequence belongs to the UPF0761 family.

Its subcellular location is the cell inner membrane. In Histophilus somni (strain 2336) (Haemophilus somnus), this protein is UPF0761 membrane protein HSM_1104.